The primary structure comprises 343 residues: Protein RecA (343 aa).

Residue 66-73 (GPESSGKT) coordinates ATP.

The protein belongs to the RecA family.

The protein resides in the cytoplasm. In terms of biological role, can catalyze the hydrolysis of ATP in the presence of single-stranded DNA, the ATP-dependent uptake of single-stranded DNA by duplex DNA, and the ATP-dependent hybridization of homologous single-stranded DNAs. It interacts with LexA causing its activation and leading to its autocatalytic cleavage. The polypeptide is Protein RecA (Rickettsia conorii (strain ATCC VR-613 / Malish 7)).